Consider the following 153-residue polypeptide: Prostaglandin E synthase (153 aa).

Topologically, residues 1–13 (MTSLGLVMENSQV) are lumenal. A helical transmembrane segment spans residues 14–42 (LPAFLLCSTLLVIKMYAVAVITGQVRLRK). Arg39 is a binding site for glutathione. At 43 to 61 (KAFANPEDALKRGGLQYCR) the chain is on the cytoplasmic side. The helical transmembrane segment at 62-91 (SDPDVERCLRAHRNDMETIYPFLFLGFVYS) threads the bilayer. Position 74–78 (74–78 (RNDME)) interacts with glutathione. Over 92-98 (FLGPNPL) the chain is Lumenal. Residues 99–120 (IAWIHFLVVLTGRVVHTVAYLG) form a helical membrane-spanning segment. Glutathione-binding residues include His114 and Tyr118. The Cytoplasmic segment spans residues 121–124 (KMNP). Residues 125–153 (RIRSGAYVLAQFACFSMALQILWEVAHHL) form a helical membrane-spanning segment. Glutathione is bound at residue 127–131 (RSGAY).

The protein belongs to the MAPEG family. It depends on glutathione as a cofactor.

It is found in the membrane. The protein resides in the cytoplasm. It localises to the perinuclear region. The catalysed reaction is prostaglandin H2 = prostaglandin E2. It catalyses the reaction 2-glyceryl-prostaglandin H2 = 2-glyceryl-prostaglandin E2. The enzyme catalyses prostaglandin G2 = (15S)-15-hydroperoxy-prostaglandin E2. It carries out the reaction 1-chloro-2,4-dinitrobenzene + glutathione = 2,4-dinitrophenyl-S-glutathione + chloride + H(+). The catalysed reaction is (5S)-hydroperoxy-(6E,8Z,11Z,14Z)-eicosatetraenoate + 2 glutathione = (5S)-hydroxy-(6E,8Z,11Z,14Z)-eicosatetraenoate + glutathione disulfide + H2O. Its pathway is lipid metabolism; prostaglandin biosynthesis. With respect to regulation, activity is increased following LPS stimulation and down-regulated by the anti-inflammatory glucocorticoid dexamethasone. In terms of biological role, terminal enzyme of the cyclooxygenase (COX)-2-mediated prostaglandin E2 (PGE2) biosynthetic pathway. Catalyzes the glutathione-dependent oxidoreduction of prostaglandin endoperoxide H2 (PGH2) to prostaglandin E2 (PGE2) in response to inflammatory stimuli. Plays a key role in inflammation response, fever and pain. Also catalyzes the oxidoreduction of endocannabinoids into prostaglandin glycerol esters and PGG2 into 15-hydroperoxy-PGE2. In addition, displays low glutathione transferase and glutathione-dependent peroxidase activities, toward 1-chloro-2,4-dinitrobenzene and 5-hydroperoxyicosatetraenoic acid (5-HPETE), respectively. This is Prostaglandin E synthase (Ptges) from Rattus norvegicus (Rat).